The chain runs to 208 residues: Urease accessory protein UreG (208 aa).

Residue 12 to 19 coordinates GTP; that stretch reads GPVGAGKT.

This sequence belongs to the SIMIBI class G3E GTPase family. UreG subfamily. Homodimer. UreD, UreF and UreG form a complex that acts as a GTP-hydrolysis-dependent molecular chaperone, activating the urease apoprotein by helping to assemble the nickel containing metallocenter of UreC. The UreE protein probably delivers the nickel.

It is found in the cytoplasm. In terms of biological role, facilitates the functional incorporation of the urease nickel metallocenter. This process requires GTP hydrolysis, probably effectuated by UreG. The protein is Urease accessory protein UreG of Rhodobacter capsulatus (Rhodopseudomonas capsulata).